Consider the following 126-residue polypeptide: Large ribosomal subunit protein bL19 (126 aa).

The protein belongs to the bacterial ribosomal protein bL19 family.

Its function is as follows. This protein is located at the 30S-50S ribosomal subunit interface and may play a role in the structure and function of the aminoacyl-tRNA binding site. The sequence is that of Large ribosomal subunit protein bL19 from Bradyrhizobium diazoefficiens (strain JCM 10833 / BCRC 13528 / IAM 13628 / NBRC 14792 / USDA 110).